A 369-amino-acid chain; its full sequence is Anhydro-N-acetylmuramic acid kinase (369 aa).

12–19 (GTSLDGVD) provides a ligand contact to ATP.

Belongs to the anhydro-N-acetylmuramic acid kinase family.

It carries out the reaction 1,6-anhydro-N-acetyl-beta-muramate + ATP + H2O = N-acetyl-D-muramate 6-phosphate + ADP + H(+). The protein operates within amino-sugar metabolism; 1,6-anhydro-N-acetylmuramate degradation. Its pathway is cell wall biogenesis; peptidoglycan recycling. Catalyzes the specific phosphorylation of 1,6-anhydro-N-acetylmuramic acid (anhMurNAc) with the simultaneous cleavage of the 1,6-anhydro ring, generating MurNAc-6-P. Is required for the utilization of anhMurNAc either imported from the medium or derived from its own cell wall murein, and thus plays a role in cell wall recycling. This Escherichia coli O7:K1 (strain IAI39 / ExPEC) protein is Anhydro-N-acetylmuramic acid kinase.